Here is a 273-residue protein sequence, read N- to C-terminus: Nucleotide-binding protein TTHA0319 (273 aa).

Position 8-15 (8-15 (GLSGAGKT)) interacts with ATP. Position 57-60 (57-60 (DARA)) interacts with GTP.

It belongs to the RapZ-like family.

Its function is as follows. Displays ATPase and GTPase activities. The chain is Nucleotide-binding protein TTHA0319 from Thermus thermophilus (strain ATCC 27634 / DSM 579 / HB8).